The sequence spans 1040 residues: DIS3-like exonuclease 1 (1040 aa).

Residues 232 to 310 (AGIKSGRYKQ…KGRTGALCEN (79 aa)) enclose the CSD1 domain. In terms of domain architecture, CSD2 spans 360 to 426 (VLVMPWDYRI…AEIATILVEN (67 aa)). Residues 459 to 808 (RLDLRETHLV…VHRLLLAAVN (350 aa)) enclose the RNB domain.

It belongs to the RNR ribonuclease family. Component of the RNA exosome complex. Mg(2+) is required as a cofactor.

The protein localises to the cytoplasm. The enzyme catalyses Exonucleolytic cleavage in the 3'- to 5'-direction to yield nucleoside 5'-phosphates.. In terms of biological role, catalytic component of the RNA exosome complex which has 3'-&gt;5' exoribonuclease activity and participates in a multitude of cellular RNA processing and degradation events. This Xenopus laevis (African clawed frog) protein is DIS3-like exonuclease 1 (dis3l).